We begin with the raw amino-acid sequence, 593 residues long: ETS-related transcription factor Elf-2 (593 aa).

A Phosphoserine modification is found at Ser107. Residues Val146–Arg201 are disordered. A compositionally biased stretch (basic residues) spans Met171 to Lys181. Thr182 carries the phosphothreonine modification. Residues Thr182–Ser191 show a composition bias toward polar residues. Phosphoserine occurs at positions 185 and 191. A DNA-binding region (ETS) is located at residues Thr208–Lys290. Phosphoserine occurs at positions 363 and 372. Thr376 is modified (phosphothreonine). At Ser430 the chain carries Phosphoserine. Residue Arg494 is modified to Omega-N-methylarginine. Thr521 carries the post-translational modification Phosphothreonine. A Glycyl lysine isopeptide (Lys-Gly) (interchain with G-Cter in SUMO2) cross-link involves residue Lys536.

It belongs to the ETS family. In terms of assembly, interacts with the LIM domains of LMO2. Interacts via its N-terminal region with RUNX1. Expressed in all fetal and adult tissues examined. Among fetal tissues, highest levels of expression detected in heart, lung, liver and kidney, and lower levels in brain. Among adult tissues, highest levels of expression detected in heart, placenta, lung, skeletal muscle, spleen, thymus, testis and ovary. Moderate expression in prostate, small intestine, kidney, liver and pancreas, and weak expression in colon, brain and peripheral blood lymphocytes.

Its subcellular location is the nucleus. In terms of biological role, isoform 1 transcriptionally activates the LYN and BLK promoters and acts synergistically with RUNX1 to transactivate the BLK promoter. Functionally, isoform 2 may function in repression of RUNX1-mediated transactivation. In Homo sapiens (Human), this protein is ETS-related transcription factor Elf-2.